Consider the following 1235-residue polypeptide: Myosin-1 (1235 aa).

Positions 1–34 (MGITKRSKDKAARAERSAGGDKSSSAKPKKATFD) are disordered. The span at 9-19 (DKAARAERSAG) shows a compositional bias: basic and acidic residues. The Myosin motor domain maps to 41–715 (IGVSDLTLLS…TLFALEHMRD (675 aa)). 134-141 (GESGAGKT) provides a ligand contact to ATP. Residues 405-487 (SIGILDIYGF…PGIFSAMKDA (83 aa)) form an actin-binding region. IQ domains lie at 719–739 (HNMA…RAEA) and 740–765 (AIRI…EGHK). In terms of domain architecture, TH1 spans 773-962 (RRRMSILGSR…TVHTQPGEPP (190 aa)). 2 disordered regions span residues 949–1076 (YKSS…AAKP) and 1135–1235 (APPV…EDDW). Residues 982 to 1046 (KGKLIKPGGP…PGAAATPAAA (65 aa)) show a composition bias toward low complexity. The segment covering 1050 to 1062 (PSHTRQQSSTSTV) has biased composition (polar residues). The segment covering 1063–1073 (RPPPPPPPAPA) has biased composition (pro residues). The SH3 domain occupies 1075–1134 (KPKIMAKVLYDFAGTRENELSIKAGDMIEIVQKENNGWWLAKTPEGQAWVPAAYVEEQAP). A compositionally biased stretch (pro residues) spans 1135 to 1150 (APPVVAPRPPPPPPPA). Over residues 1180 to 1210 (SLQNRDSGMSLNGANGSGSDASRSSTPTPSI) the composition is skewed to polar residues.

This sequence belongs to the TRAFAC class myosin-kinesin ATPase superfamily. Myosin family.

The protein localises to the cytoplasm. The protein resides in the cytoskeleton. Its subcellular location is the actin patch. In terms of biological role, type-I myosin implicated in the organization of the actin cytoskeleton. Required for proper actin cytoskeleton polarization. At the cell cortex, assembles in patch-like structures together with proteins from the actin-polymerizing machinery and promotes actin assembly. Functions as actin nucleation-promoting factor (NPF) for the Arp2/3 complex. This is Myosin-1 (myo-1) from Neurospora crassa (strain ATCC 24698 / 74-OR23-1A / CBS 708.71 / DSM 1257 / FGSC 987).